A 204-amino-acid polypeptide reads, in one-letter code: Protein FAM167A (204 aa).

Residues 58 to 80 form a disordered region; sequence GLAVSDGSTELEKDAGLKPRATP. Positions 113-146 form a coiled coil; the sequence is LRKELMEMRIQDQQLARQLMRLRGDINKLKVEQT.

It belongs to the FAM167 (SEC) family.

The chain is Protein FAM167A (fam167a) from Danio rerio (Zebrafish).